Consider the following 514-residue polypeptide: 3-octaprenyl-4-hydroxybenzoate carboxy-lyase (514 aa).

Residue asparagine 177 coordinates Mn(2+). Prenylated FMN is bound by residues 180 to 182 (IYR), 194 to 196 (RWL), and 199 to 200 (RG). Residue glutamate 243 participates in Mn(2+) binding. The active-site Proton donor is aspartate 314.

The protein belongs to the UbiD family. Homohexamer. It depends on prenylated FMN as a cofactor. The cofactor is Mn(2+).

Its subcellular location is the cell membrane. The catalysed reaction is a 4-hydroxy-3-(all-trans-polyprenyl)benzoate + H(+) = a 2-(all-trans-polyprenyl)phenol + CO2. It functions in the pathway cofactor biosynthesis; ubiquinone biosynthesis. Functionally, catalyzes the decarboxylation of 3-octaprenyl-4-hydroxy benzoate to 2-octaprenylphenol, an intermediate step in ubiquinone biosynthesis. The sequence is that of 3-octaprenyl-4-hydroxybenzoate carboxy-lyase from Bordetella petrii (strain ATCC BAA-461 / DSM 12804 / CCUG 43448).